The sequence spans 368 residues: MSVAGLKKQFYKASQLVSEKVGGAEGTKLDDDFKEMEKKVDVTSKAVTEVLARTIEYLQPNPASRAKLTMLNTVSKIRGQVKNPGYPQSEGLLGECMIRHGKELGGESNFGDALLDAGESMKRLAEVKDSLDIEVKQNFIDPLQNLCEKDLKEIQHHLKKLEGRRLDFDYKKKRQGKIPDEELRQALEKFEESKEVAETSMHNLLETDIEQVSQLSALVDAQLDYHRQAVQILDELAEKLKRRMREASSRPKREYKPKPREPFDLGEPEQSNGGFPCTTAPKIAASSSFRSSDKPIRTPSRSMPPLDQPSCKALYDFEPENDGELGFHEGDVITLTNQIDENWYEGMLDGQSGFFPLSYVEVLVPLPQ.

A membrane-binding amphipathic helix region spans residues 1-21 (MSVAGLKKQFYKASQLVSEKV). Positions 18–249 (SEKVGGAEGT…LKRRMREASS (232 aa)) constitute a BAR domain. A required for dimerization upon membrane association region spans residues 60–87 (PNPASRAKLTMLNTVSKIRGQVKNPGYP). Residues 145 to 250 (NLCEKDLKEI…KRRMREASSR (106 aa)) adopt a coiled-coil conformation. Residues 218-254 (LVDAQLDYHRQAVQILDELAEKLKRRMREASSRPKRE) are interaction with ARC. Residues 244 to 308 (MREASSRPKR…PSRSMPPLDQ (65 aa)) form a disordered region. The segment covering 245 to 263 (REASSRPKREYKPKPREPF) has biased composition (basic and acidic residues). Residues Ser-288 and Ser-292 each carry the phosphoserine modification. Thr-298 carries the post-translational modification Phosphothreonine. Positions 306–365 (LDQPSCKALYDFEPENDGELGFHEGDVITLTNQIDENWYEGMLDGQSGFFPLSYVEVLVP) constitute an SH3 domain. At Tyr-315 the chain carries Phosphotyrosine.

It belongs to the endophilin family. In terms of assembly, interacts with ARC. Interacts with SYNJ1 and DNM1. Interacts with PDCD6IP. Interacts with BIN2. In terms of tissue distribution, ubiquitous. Higher expression in pancreas, placenta, prostate, testis and uterus.

It localises to the cytoplasm. The protein localises to the early endosome membrane. It is found in the cell projection. The protein resides in the podosome. Functionally, implicated in endocytosis. May recruit other proteins to membranes with high curvature. This is Endophilin-A2 (SH3GL1) from Homo sapiens (Human).